The primary structure comprises 777 residues: Ribosome biogenesis protein ERB1 (777 aa).

The interval 1 to 122 is disordered; sequence MAPTAPAKKR…RPNYRVVEDA (122 aa). Over residues 36–67 the composition is skewed to acidic residues; it reads SEDDSDFVASGDEDEEDEDEDEDEDKDEDDEH. WD repeat units lie at residues 430-469, 473-513, 562-604, 606-645, 648-687, 691-731, and 747-777; these read GHEG…QVWA, SSDE…PEVE, TVRS…SQIP, RKLS…LVKV, PGAR…RPYK, FHPQ…DLME, and VDSL…RLWM.

The protein belongs to the WD repeat BOP1/ERB1 family. In terms of assembly, component of the NOP7 complex, composed of ERB1, NOP7 and YTM1. The complex is held together by ERB1, which interacts with NOP7 via its N-terminal domain and with YTM1 via a high-affinity interaction between the seven-bladed beta-propeller domains of the 2 proteins. The NOP7 complex associates with the 66S pre-ribosome.

It is found in the nucleus. The protein resides in the nucleolus. Its subcellular location is the nucleoplasm. Functionally, component of the NOP7 complex, which is required for maturation of the 25S and 5.8S ribosomal RNAs and formation of the 60S ribosome. The polypeptide is Ribosome biogenesis protein ERB1 (Pyricularia oryzae (strain 70-15 / ATCC MYA-4617 / FGSC 8958) (Rice blast fungus)).